The following is a 107-amino-acid chain: uncharacterized protein (107 aa).

The 102-residue stretch at 6–107 (KKVIEQILDN…QAQVETLLAA (102 aa)) folds into the Glutaredoxin domain. K23 contributes to the glutathione binding site. [2Fe-2S] cluster is bound at residue C31. Glutathione is bound by residues R60 and 85–86 (AD).

It belongs to the glutaredoxin family. Monothiol subfamily.

The protein resides in the plastid. The protein localises to the chloroplast. This is an uncharacterized protein from Porphyra purpurea (Red seaweed).